The primary structure comprises 283 residues: V-set domain containing T-cell activation inhibitor 1 (283 aa).

The N-terminal stretch at Met1–Ala24 is a signal peptide. 2 Ig-like V-type domains span residues His35 to Glu144 and Pro153 to Thr241. Intrachain disulfides connect Cys56/Cys130 and Cys168/Cys225. Asn216 carries an N-linked (GlcNAc...) asparagine glycan. Residue Gly257 is the site of GPI-anchor amidated glycine attachment. Residues Pro258 to Arg283 constitute a propeptide, removed in mature form.

Belongs to the immunoglobulin superfamily. BTN/MOG family. N-glycosylated. In terms of tissue distribution, expressed on the surface of professional antigen-presenting cells (at protein level). Widely expressed, including in kidney, liver, lung, pancreas, placenta, prostate, spleen, testis and thymus.

Its subcellular location is the cell membrane. Its function is as follows. Negatively regulates T-cell-mediated immune response by inhibiting T-cell activation, proliferation, cytokine production and development of cytotoxicity. When expressed on the cell surface of tumor macrophages, plays an important role, together with regulatory T-cells (Treg), in the suppression of tumor-associated antigen-specific T-cell immunity. Involved in promoting epithelial cell transformation. The chain is V-set domain containing T-cell activation inhibitor 1 from Mus musculus (Mouse).